Reading from the N-terminus, the 454-residue chain is Histidine--tRNA ligase (454 aa).

The protein belongs to the class-II aminoacyl-tRNA synthetase family. In terms of assembly, homodimer.

The protein localises to the cytoplasm. The catalysed reaction is tRNA(His) + L-histidine + ATP = L-histidyl-tRNA(His) + AMP + diphosphate + H(+). The protein is Histidine--tRNA ligase of Bacteroides fragilis (strain ATCC 25285 / DSM 2151 / CCUG 4856 / JCM 11019 / LMG 10263 / NCTC 9343 / Onslow / VPI 2553 / EN-2).